A 1231-amino-acid chain; its full sequence is ATP-dependent RNA helicase DHX30 (1231 aa).

Residues 39 to 65 (PDGLEGARQEDEEEQPPPPGAEEQSTA) form a disordered region. 2 DRBM domains span residues 80–148 (PKNL…CQLF) and 292–359 (PKNL…CQKL). Positions 488-656 (LSAIEQNPVV…FGGCPVVKVP (169 aa)) constitute a Helicase ATP-binding domain. ATP is bound at residue 501-508 (GDTGCGKT). The short motif at 603–606 (DEVH) is the DEAH box element. Residues 697 to 870 (LITDLVLQID…NLVVQAKIHM (174 aa)) form the Helicase C-terminal domain.

Belongs to the DEAD box helicase family. DEAH subfamily.

It is found in the cytoplasm. The protein localises to the mitochondrion. The protein resides in the mitochondrion matrix. It localises to the mitochondrion nucleoid. It catalyses the reaction ATP + H2O = ADP + phosphate + H(+). Functionally, RNA-dependent helicase. Plays an important role in the assembly of the mitochondrial large ribosomal subunit. Required for optimal function of the zinc-finger antiviral protein ZC3HAV1. Associates with mitochondrial DNA. Involved in nervous system development and differentiation through its involvement in the up-regulation of a number of genes which are required for neurogenesis, including GSC, NCAM1, neurogenin, and NEUROD. The sequence is that of ATP-dependent RNA helicase DHX30 (DHX30) from Gallus gallus (Chicken).